The following is a 184-amino-acid chain: NADH-quinone oxidoreductase subunit B (184 aa).

4 residues coordinate [4Fe-4S] cluster: Cys37, Cys38, Cys103, and Cys132.

This sequence belongs to the complex I 20 kDa subunit family. As to quaternary structure, NDH-1 is composed of 14 different subunits. Subunits NuoB, C, D, E, F, and G constitute the peripheral sector of the complex. [4Fe-4S] cluster is required as a cofactor.

The protein localises to the cell membrane. It catalyses the reaction a quinone + NADH + 5 H(+)(in) = a quinol + NAD(+) + 4 H(+)(out). Its function is as follows. NDH-1 shuttles electrons from NADH, via FMN and iron-sulfur (Fe-S) centers, to quinones in the respiratory chain. The immediate electron acceptor for the enzyme in this species is believed to be a menaquinone. Couples the redox reaction to proton translocation (for every two electrons transferred, four hydrogen ions are translocated across the cytoplasmic membrane), and thus conserves the redox energy in a proton gradient. The sequence is that of NADH-quinone oxidoreductase subunit B from Rhodococcus jostii (strain RHA1).